An 884-amino-acid chain; its full sequence is Putative GTP diphosphokinase RSH1, chloroplastic (884 aa).

Residues methionine 1–valine 55 constitute a chloroplast transit peptide. The HD domain maps to phenylalanine 172–methionine 279. Residues leucine 563–threonine 626 form the TGS domain. The span at glutamine 711–serine 727 shows a compositional bias: polar residues. Residues glutamine 711 to aspartate 747 are disordered. Residues tryptophan 797–serine 868 form the ACT domain.

It belongs to the RelA/SpoT family. As to quaternary structure, interacts with RPP4. Interacts with RPP5. In terms of tissue distribution, expressed in hypocotyls, shoots, cotyledons, rosette leaves, sepals and pistils.

It is found in the plastid. The protein localises to the chloroplast. It carries out the reaction GTP + ATP = guanosine 3'-diphosphate 5'-triphosphate + AMP. Functionally, may be involved in a rapid plant ppGpp (guanosine 3'-diphosphate 5'-diphosphate)-mediated response to pathogens and other stresses. Unable to functionally complement E.coli relA mutants. This chain is Putative GTP diphosphokinase RSH1, chloroplastic (RSH1), found in Arabidopsis thaliana (Mouse-ear cress).